A 310-amino-acid chain; its full sequence is Putative type II methyltransferase M.MJ0563P (310 aa).

An SAM-dependent MTase C5-type domain is found at 1–310 (MNVIDLFSGC…AIAKEIKKQL (310 aa)). Residue Cys77 is part of the active site.

It belongs to the class I-like SAM-binding methyltransferase superfamily. C5-methyltransferase family.

It catalyses the reaction a 2'-deoxycytidine in DNA + S-adenosyl-L-methionine = a 5-methyl-2'-deoxycytidine in DNA + S-adenosyl-L-homocysteine + H(+). Its function is as follows. A putative methylase that may protect DNA from cleavage by an unknown endonuclease. This chain is Putative type II methyltransferase M.MJ0563P, found in Methanocaldococcus jannaschii (strain ATCC 43067 / DSM 2661 / JAL-1 / JCM 10045 / NBRC 100440) (Methanococcus jannaschii).